A 273-amino-acid polypeptide reads, in one-letter code: Bidirectional sugar transporter SWEET1a (273 aa).

Residues 1–6 (MEHIAR) lie on the Extracellular side of the membrane. Residues 7–27 (FFFGVSGNVIALFLFLSPVVT) form a helical membrane-spanning segment. The MtN3/slv 1 domain occupies 7–95 (FFFGVSGNVI…VIFLIFAERK (89 aa)). The Cytoplasmic segment spans residues 28 to 42 (FWRIIKKRSTEDFSG). A helical membrane pass occupies residues 43 to 63 (VPYNMTLLNCLLSAWYGLPFV). Residues 64 to 71 (SPNNILVT) lie on the Extracellular side of the membrane. A helical transmembrane segment spans residues 72–92 (TINGTGSVIEAIYVVIFLIFA). At 93 to 101 (ERKARLKMM) the chain is on the cytoplasmic side. The helical transmembrane segment at 102-122 (GLLGLVTSIFTMVVLVSLLAL) threads the bilayer. Over 123 to 128 (HGQGRK) the chain is Extracellular. Residues 129–149 (LFCGLAATIFSICMYASPLSI) form a helical membrane-spanning segment. The MtN3/slv 2 domain occupies 131–214 (CGLAATIFSI…ILYAIYRNHK (84 aa)). The Cytoplasmic portion of the chain corresponds to 150–163 (MRLVIKTKSVEFMP). The chain crosses the membrane as a helical span at residues 164 to 184 (FLLSLSVFLCGTSWFIYGLLG). Residues 185 to 188 (RDPF) lie on the Extracellular side of the membrane. Residues 189-209 (IAIPNGCGSFLGLMQLILYAI) form a helical membrane-spanning segment. Topologically, residues 210–273 (YRNHKGATPA…SADDKVASQV (64 aa)) are cytoplasmic.

This sequence belongs to the SWEET sugar transporter family. As to quaternary structure, forms homooligomers and/or heterooligomers.

The protein localises to the cell membrane. In terms of biological role, mediates both low-affinity uptake and efflux of sugar across the plasma membrane. The polypeptide is Bidirectional sugar transporter SWEET1a (SWEET1A) (Oryza sativa subsp. japonica (Rice)).